A 245-amino-acid chain; its full sequence is NLP effector protein Pc118551 (245 aa).

The N-terminal stretch at 1 to 19 is a signal peptide; it reads MNLRAFLLSAVAALVAVQA. The Hepta-peptide GHRHDWE motif motif lies at 121–127; that stretch reads QRRHLWE. N140 is a glycosylation site (N-linked (GlcNAc...) asparagine).

The protein belongs to the Necrosis inducing protein (NPP1) family.

Its subcellular location is the secreted. In terms of biological role, secreted effector that contributes strongly to virulence during infection by P.capsici. The polypeptide is NLP effector protein Pc118551 (Phytophthora capsici).